A 284-amino-acid chain; its full sequence is uncharacterized protein (284 aa).

The Photolyase/cryptochrome alpha/beta domain maps to 4-133; sequence PLHLFWHRRD…AVHRQWDQLL (130 aa).

This is an uncharacterized protein from Synechococcus sp. (strain PCC 6716).